Reading from the N-terminus, the 401-residue chain is Large ribosomal subunit protein uL4B (401 aa).

The segment covering 351-373 (IKAKEKKPDDGKPKAKKPLDAKT) has biased composition (basic and acidic residues). The interval 351 to 401 (IKAKEKKPDDGKPKAKKPLDAKTKMIKLAKAKKRQARAEAKTAEAKTAESK) is disordered. A compositionally biased stretch (basic residues) spans 374–385 (KMIKLAKAKKRQ). A compositionally biased stretch (basic and acidic residues) spans 386 to 401 (ARAEAKTAEAKTAESK).

The protein belongs to the universal ribosomal protein uL4 family. In terms of assembly, component of the large ribosomal subunit.

The protein localises to the cytoplasm. In terms of biological role, component of the large ribosomal subunit. The ribosome is a large ribonucleoprotein complex responsible for the synthesis of proteins in the cell. This Xenopus laevis (African clawed frog) protein is Large ribosomal subunit protein uL4B (rpl4-b).